The primary structure comprises 1980 residues: Unconventional myosin-IXb (1980 aa).

Ser-2 bears the N-acetylserine mark. Residues 15–114 (ATFHLHIYPQ…YYFLLQERNA (100 aa)) enclose the Ras-associating domain. One can recognise a Myosin motor domain in the interval 146 to 954 (ADFDDLCNLP…ERQALQERLH (809 aa)). 239–246 (GESGSGKT) serves as a coordination point for ATP. Positions 715–736 (GVSSPVTRSHVEELPRGANTPS) are disordered. Phosphoserine occurs at positions 717 and 718. The tract at residues 845 to 856 (KAEPFFIRCIRS) is actin-binding. Positions 941–1045 (LKETERQALQ…CRGHLQRRSF (105 aa)) are neck or regulatory domain. IQ domains lie at 958 to 978 (LRRI…RHFV), 981 to 1001 (KHAA…RTLE), 1002 to 1024 (RTRA…AYHH), and 1025 to 1054 (QRHS…EKQK). Residue Ser-1046 is modified to Phosphoserine. The segment at 1046-1980 (SQMMLEKQKA…ERAVRGAAEE (935 aa)) is tail. Disordered regions lie at residues 1049 to 1281 (MLEK…HPDT), 1302 to 1380 (SQSL…QGDS), and 1394 to 1449 (DKKP…NRKV). The segment covering 1097–1106 (TWMNSKSPNG) has biased composition (polar residues). Ser-1108, Ser-1115, and Ser-1177 each carry phosphoserine. Basic and acidic residues-rich tracts occupy residues 1129–1177 (ESHE…RKAS) and 1186–1195 (EDTKEPREDG). Residues Ser-1220, Ser-1222, Ser-1229, Ser-1237, Ser-1243, and Ser-1247 each carry the phosphoserine modification. Positions 1235-1247 (RVSPVLPSSSLES) are enriched in low complexity. The segment covering 1250 to 1265 (DEDKGENSTKVQDKPE) has biased composition (basic and acidic residues). 3 positions are modified to phosphoserine: Ser-1266, Ser-1268, and Ser-1304. Thr-1319 is subject to Phosphothreonine. Phosphoserine is present on residues Ser-1327, Ser-1329, and Ser-1337. A compositionally biased stretch (polar residues) spans 1327–1344 (SFSTSDVSKLSPVKTSTE). The Phorbol-ester/DAG-type zinc finger occupies 1592–1641 (GHVFASYQVNIPQSCEQCLSYIWLMDKALLCSVCKMTCHKKCVHKIQSYC). Residue Ser-1649 is modified to Phosphoserine. Positions 1663–1848 (DSLTSDKASV…MLIKEQMRKY (186 aa)) constitute a Rho-GAP domain. Residues 1699–1704 (AANRTR) are interaction with RHOA. Residues 1841 to 1861 (IKEQMRKYKVKMEEINHLEAA) are a coiled coil. Ser-1886 is subject to Phosphoserine. Residues 1891–1923 (VRTKSPRTPVVQDLEELGALPEEAAGGDEDREK) are disordered. Residues 1918–1948 (DEDREKEILMERIQSIKEEKEDITYRLPELD) are a coiled coil. Phosphoserine is present on residues Ser-1932, Ser-1952, and Ser-1959. The segment covering 1937–1953 (KEDITYRLPELDPRGSD) has biased composition (basic and acidic residues). The disordered stretch occupies residues 1937–1980 (KEDITYRLPELDPRGSDEENLDSETSASTESLLEERAVRGAAEE). Thr-1965 bears the Phosphothreonine mark. Over residues 1969-1980 (LEERAVRGAAEE) the composition is skewed to basic and acidic residues.

It belongs to the TRAFAC class myosin-kinesin ATPase superfamily. Myosin family. Interacts (via IQ domains) with CALM. Interacts with RHOA. Interacts (via Rho-GAP domain) with ROBO1; this inhibits the interaction with RHOA and the stimulation of RHOA GTPase activity, and thereby increases the levels of active RHOA. Expressed in testis, lung, thymus, brain, liver, spleen and heart muscle. Detected in lung, testis, spleen and liver, and at reduced level in different brain regions (at protein level).

The protein resides in the cytoplasm. Its subcellular location is the cell cortex. The protein localises to the perinuclear region. It is found in the cytoskeleton. Its function is as follows. Myosins are actin-based motor molecules with ATPase activity. Unconventional myosins serve in intracellular movements. Binds actin with high affinity both in the absence and presence of ATP and its mechanochemical activity is inhibited by calcium ions. Also acts as a GTPase activator for RHOA. Plays a role in the regulation of cell migration via its role as RHOA GTPase activator. This is regulated by its interaction with the SLIT2 receptor ROBO1; interaction with ROBO1 impairs interaction with RHOA and subsequent activation of RHOA GTPase activity, and thereby leads to increased levels of active, GTP-bound RHOA. The chain is Unconventional myosin-IXb (Myo9b) from Rattus norvegicus (Rat).